Consider the following 267-residue polypeptide: Indole-3-glycerol phosphate synthase 1 (267 aa).

It belongs to the TrpC family.

It carries out the reaction 1-(2-carboxyphenylamino)-1-deoxy-D-ribulose 5-phosphate + H(+) = (1S,2R)-1-C-(indol-3-yl)glycerol 3-phosphate + CO2 + H2O. Its pathway is amino-acid biosynthesis; L-tryptophan biosynthesis; L-tryptophan from chorismate: step 4/5. The chain is Indole-3-glycerol phosphate synthase 1 (trpC1) from Ralstonia nicotianae (strain ATCC BAA-1114 / GMI1000) (Ralstonia solanacearum).